Consider the following 309-residue polypeptide: NAD kinase (309 aa).

The active-site Proton acceptor is the aspartate 89. NAD(+) is bound by residues 89–90 (DG), 163–164 (NE), arginine 191, aspartate 193, and 204–209 (TAYSLS).

This sequence belongs to the NAD kinase family. The cofactor is a divalent metal cation.

The protein resides in the cytoplasm. It catalyses the reaction NAD(+) + ATP = ADP + NADP(+) + H(+). Functionally, involved in the regulation of the intracellular balance of NAD and NADP, and is a key enzyme in the biosynthesis of NADP. Catalyzes specifically the phosphorylation on 2'-hydroxyl of the adenosine moiety of NAD to yield NADP. The protein is NAD kinase of Shewanella halifaxensis (strain HAW-EB4).